A 165-amino-acid polypeptide reads, in one-letter code: Protein SprT (165 aa).

One can recognise a SprT-like domain in the interval 20–163; the sequence is EKLAQANLKL…RCVHCGEQLV (144 aa). A Zn(2+)-binding site is contributed by histidine 78. Glutamate 79 is an active-site residue. Residue histidine 82 coordinates Zn(2+).

It belongs to the SprT family. Requires Zn(2+) as cofactor.

It localises to the cytoplasm. This is Protein SprT from Shigella sonnei (strain Ss046).